The following is a 121-amino-acid chain: Large ribosomal subunit protein uL18 (121 aa).

The protein belongs to the universal ribosomal protein uL18 family. In terms of assembly, part of the 50S ribosomal subunit; part of the 5S rRNA/L5/L18/L25 subcomplex. Contacts the 5S and 23S rRNAs.

Its function is as follows. This is one of the proteins that bind and probably mediate the attachment of the 5S RNA into the large ribosomal subunit, where it forms part of the central protuberance. The polypeptide is Large ribosomal subunit protein uL18 (Pelobacter propionicus (strain DSM 2379 / NBRC 103807 / OttBd1)).